A 227-amino-acid polypeptide reads, in one-letter code: Uracil-DNA glycosylase 2 (227 aa).

The Proton acceptor role is filled by Asp67.

It belongs to the uracil-DNA glycosylase (UDG) superfamily. UNG family.

It is found in the cytoplasm. The catalysed reaction is Hydrolyzes single-stranded DNA or mismatched double-stranded DNA and polynucleotides, releasing free uracil.. Its function is as follows. Excises uracil residues from the DNA which can arise as a result of misincorporation of dUMP residues by DNA polymerase or due to deamination of cytosine. The polypeptide is Uracil-DNA glycosylase 2 (ung2) (Streptomyces coelicolor (strain ATCC BAA-471 / A3(2) / M145)).